Consider the following 215-residue polypeptide: Elongation factor Ts (215 aa).

An involved in Mg(2+) ion dislocation from EF-Tu region spans residues 80-83 (TDFV).

Belongs to the EF-Ts family.

It localises to the cytoplasm. Its function is as follows. Associates with the EF-Tu.GDP complex and induces the exchange of GDP to GTP. It remains bound to the aminoacyl-tRNA.EF-Tu.GTP complex up to the GTP hydrolysis stage on the ribosome. The polypeptide is Elongation factor Ts (Heliobacterium modesticaldum (strain ATCC 51547 / Ice1)).